A 256-amino-acid polypeptide reads, in one-letter code: ATP synthase peripheral stalk subunit b, mitochondrial (256 aa).

A mitochondrion-targeting transit peptide spans 1–42; that stretch reads MLSRVVLSAAATAASSLKNAAFLGPGVLQATRTFHTGQPHLA. Lys131 carries the N6-succinyllysine modification. An N6-acetyllysine mark is found at Lys139, Lys154, Lys162, Lys221, Lys233, and Lys244.

It belongs to the eukaryotic ATPase B chain family. In terms of assembly, component of the ATP synthase complex composed at least of ATP5F1A/subunit alpha, ATP5F1B/subunit beta, ATP5MC1/subunit c (homooctomer), MT-ATP6/subunit a, MT-ATP8/subunit 8, ATP5ME/subunit e, ATP5MF/subunit f, ATP5MG/subunit g, ATP5MK/subunit k, ATP5MJ/subunit j, ATP5F1C/subunit gamma, ATP5F1D/subunit delta, ATP5F1E/subunit epsilon, ATP5PF/subunit F6, ATP5PB/subunit b, ATP5PD/subunit d, ATP5PO/subunit OSCP. ATP synthase complex consists of a soluble F(1) head domain (subunits alpha(3) and beta(3)) - the catalytic core - and a membrane F(0) domain - the membrane proton channel (subunits c, a, 8, e, f, g, k and j). These two domains are linked by a central stalk (subunits gamma, delta, and epsilon) rotating inside the F1 region and a stationary peripheral stalk (subunits F6, b, d, and OSCP).

It is found in the mitochondrion. It localises to the mitochondrion inner membrane. Functionally, subunit b, of the mitochondrial membrane ATP synthase complex (F(1)F(0) ATP synthase or Complex V) that produces ATP from ADP in the presence of a proton gradient across the membrane which is generated by electron transport complexes of the respiratory chain. ATP synthase complex consist of a soluble F(1) head domain - the catalytic core - and a membrane F(1) domain - the membrane proton channel. These two domains are linked by a central stalk rotating inside the F(1) region and a stationary peripheral stalk. During catalysis, ATP synthesis in the catalytic domain of F(1) is coupled via a rotary mechanism of the central stalk subunits to proton translocation. In vivo, can only synthesize ATP although its ATP hydrolase activity can be activated artificially in vitro. Part of the complex F(0) domain. Part of the complex F(0) domain and the peripheric stalk, which acts as a stator to hold the catalytic alpha(3)beta(3) subcomplex and subunit a/ATP6 static relative to the rotary elements. In Pongo abelii (Sumatran orangutan), this protein is ATP synthase peripheral stalk subunit b, mitochondrial.